Reading from the N-terminus, the 60-residue chain is Mastoparan-VB2 (60 aa).

An N-terminal signal peptide occupies residues 1–27; sequence MKNTILLLFTAFIFLMGFFGMSADALA. 4 AXPX repeats span residues 27 to 30, 31 to 34, 35 to 38, and 41 to 44; these read ADPK, ADPL, AGPF, and ADPD. Residues 28–45 constitute a propeptide that is removed on maturation; it reads DPKADPLAGPFPDADPDP. A Leucine amide modification is found at L59.

This sequence belongs to the MCD family. Mastoparan subfamily. As to expression, expressed by the venom gland.

Its subcellular location is the secreted. It localises to the target cell membrane. Antimicrobial peptide. Shows activity against both Gram-positive and -negative bacteria, as well against fungi. Also promotes moderate mast cell degranulation. Does not show hemolytic activity on rabbit and human erythrocytes. Its mast cell degranulation activity may be related to the activation of G-protein coupled receptors in mast cells as well as interaction with other proteins located in cell endosomal membranes in the mast cells. The protein is Mastoparan-VB2 of Vespa bicolor (Black shield wasp).